Here is a 373-residue protein sequence, read N- to C-terminus: Lipoyl synthase (373 aa).

A disordered region spans residues histidine 12–isoleucine 36. [4Fe-4S] cluster contacts are provided by cysteine 81, cysteine 86, cysteine 92, cysteine 107, cysteine 111, cysteine 114, and serine 323. The Radical SAM core domain occupies phenylalanine 93–serine 312. Residues proline 346–arginine 373 form a disordered region.

Belongs to the radical SAM superfamily. Lipoyl synthase family. Requires [4Fe-4S] cluster as cofactor.

Its subcellular location is the cytoplasm. The catalysed reaction is [[Fe-S] cluster scaffold protein carrying a second [4Fe-4S](2+) cluster] + N(6)-octanoyl-L-lysyl-[protein] + 2 oxidized [2Fe-2S]-[ferredoxin] + 2 S-adenosyl-L-methionine + 4 H(+) = [[Fe-S] cluster scaffold protein] + N(6)-[(R)-dihydrolipoyl]-L-lysyl-[protein] + 4 Fe(3+) + 2 hydrogen sulfide + 2 5'-deoxyadenosine + 2 L-methionine + 2 reduced [2Fe-2S]-[ferredoxin]. The protein operates within protein modification; protein lipoylation via endogenous pathway; protein N(6)-(lipoyl)lysine from octanoyl-[acyl-carrier-protein]: step 2/2. In terms of biological role, catalyzes the radical-mediated insertion of two sulfur atoms into the C-6 and C-8 positions of the octanoyl moiety bound to the lipoyl domains of lipoate-dependent enzymes, thereby converting the octanoylated domains into lipoylated derivatives. In Xylella fastidiosa (strain 9a5c), this protein is Lipoyl synthase.